A 467-amino-acid polypeptide reads, in one-letter code: Putative pentatricopeptide repeat-containing protein At1g10330 (467 aa).

10 PPR repeats span residues 50–84 (TKCV…HVQP), 85–119 (NNLT…GFLW), 120–150 (DPFV…ILNP), 151–181 (CVVA…MPVT), 182–216 (DVVS…ERAV), 220–256 (NEAT…EIIL), 257–287 (TTTL…IRDK), 288–322 (KVCA…YVHP), 323–358 (NGIT…KIIP), and 359–389 (TSEH…LPFE). The segment at 394-467 (VLGALLGACK…RKIPAYSVLT (74 aa)) is type E motif; degenerate.

Belongs to the PPR family. PCMP-E subfamily.

This Arabidopsis thaliana (Mouse-ear cress) protein is Putative pentatricopeptide repeat-containing protein At1g10330 (PCMP-E71).